The primary structure comprises 144 residues: Putative HTH-type transcriptional regulator aq_268 (144 aa).

One can recognise an HTH rrf2-type domain in the interval 2–133 (IFSDTVRYAL…KGTTIKDLIN (132 aa)).

This is Putative HTH-type transcriptional regulator aq_268 from Aquifex aeolicus (strain VF5).